The following is a 248-amino-acid chain: Type III pantothenate kinase (248 aa).

6–13 contacts ATP; it reads DCGNSLIK. Residues Y92 and 99 to 102 each bind substrate; that span reads GLDR. D101 (proton acceptor) is an active-site residue. D121 contacts K(+). ATP is bound at residue T124. T180 is a substrate binding site.

It belongs to the type III pantothenate kinase family. As to quaternary structure, homodimer. NH4(+) is required as a cofactor. The cofactor is K(+).

It localises to the cytoplasm. It catalyses the reaction (R)-pantothenate + ATP = (R)-4'-phosphopantothenate + ADP + H(+). It participates in cofactor biosynthesis; coenzyme A biosynthesis; CoA from (R)-pantothenate: step 1/5. Functionally, catalyzes the phosphorylation of pantothenate (Pan), the first step in CoA biosynthesis. This Pseudomonas aeruginosa (strain LESB58) protein is Type III pantothenate kinase.